Reading from the N-terminus, the 80-residue chain is Large ribosomal subunit protein uL24 (80 aa).

It belongs to the universal ribosomal protein uL24 family. As to quaternary structure, part of the 50S ribosomal subunit.

Its function is as follows. One of two assembly initiator proteins, it binds directly to the 5'-end of the 23S rRNA, where it nucleates assembly of the 50S subunit. In terms of biological role, one of the proteins that surrounds the polypeptide exit tunnel on the outside of the subunit. The protein is Large ribosomal subunit protein uL24 of Chlorobaculum tepidum (strain ATCC 49652 / DSM 12025 / NBRC 103806 / TLS) (Chlorobium tepidum).